A 424-amino-acid polypeptide reads, in one-letter code: MFLLPRFVLVSCIIGSLGFENPPTNVVSHLNGDWFLFGDSRSDCNHVVNTNPRNYSYMDLNPALCDSGKISSKAGNSIFRSFHFTDFYNYTGEGQQIIFYEGVNFTPYHAFKCTTSGSNDIWMQNKGLFYTQVYKNMAVYRSLTFVNVPYVYNGSAQSTALCKSGSLVLNNPAYIAREANFGDYYYKVEADFYLSGCDEYIVPLCIFNGKFLSNTKYYDDSQYYFNKDTGVIYGLNSTETITTGFDFNCHYLVLPSGNYLAISNELLLTVPTKAICLNKRKDFTPVQVVDSRWNNARQSDNMTAVACQPPYCYFRNSTTNYVGVYDINHGDAGFTSILSGLLYDSPCFSQQGVFRYNNVSSVWPLYPYGRCPTAADINTPDVPICVYDPLPLILLGILLGVAVIIIVVLLLYFMVDNGTRLHDA.

A signal peptide spans M1 to S16. The interval F7–G127 is esterase domain 1. Residues L17–L392 lie on the Virion surface side of the membrane. The active-site Nucleophile is S40. C44 and C65 form a disulfide bridge. N-linked (GlcNAc...) asparagine; by host glycosylation is found at N54, N89, N153, N236, and N301. 3 cysteine pairs are disulfide-bonded: C113-C162, C197-C276, and C205-C249. A receptor binding region spans residues L128–L266. Residues L267 to T379 are esterase domain 2. Cysteines 307 and 312 form a disulfide. Residue N316 is glycosylated (N-linked (GlcNAc...) asparagine; by host). Active-site charge relay system residues include D326 and H329. Residues C347 and C371 are joined by a disulfide bond. N-linked (GlcNAc...) asparagine; by host glycosylation occurs at N358. Residues I393 to F413 traverse the membrane as a helical segment. The Intravirion portion of the chain corresponds to M414–A424. N417 carries an N-linked (GlcNAc...) asparagine; by host glycan.

Belongs to the influenza type C/coronaviruses hemagglutinin-esterase family. As to quaternary structure, homodimer; disulfide-linked. Forms a complex with the M protein in the pre-Golgi. Associates then with S-M complex to form a ternary complex S-M-HE. N-glycosylated in the host RER.

It is found in the virion membrane. The protein localises to the host cell membrane. It catalyses the reaction N-acetyl-9-O-acetylneuraminate + H2O = N-acetylneuraminate + acetate + H(+). The enzyme catalyses N-acetyl-4-O-acetylneuraminate + H2O = N-acetylneuraminate + acetate + H(+). In terms of biological role, structural protein that makes short spikes at the surface of the virus. Contains receptor binding and receptor-destroying activities. Mediates de-O-acetylation of N-acetyl-4-O-acetylneuraminic acid, which is probably the receptor determinant recognized by the virus on the surface of erythrocytes and susceptible cells. This receptor-destroying activity is important for virus release as it probably helps preventing self-aggregation and ensures the efficient spread of the progeny virus from cell to cell. May serve as a secondary viral attachment protein for initiating infection, the spike protein being the major one. May become a target for both the humoral and the cellular branches of the immune system. The sequence is that of Hemagglutinin-esterase from Bovine coronavirus (strain G95) (BCoV).